The sequence spans 377 residues: Alanine racemase (377 aa).

K37 serves as the catalytic Proton acceptor; specific for D-alanine. K37 carries the post-translational modification N6-(pyridoxal phosphate)lysine. Position 135 (R135) interacts with substrate. Residue Y271 is the Proton acceptor; specific for L-alanine of the active site. Substrate is bound at residue M319.

The protein belongs to the alanine racemase family. Requires pyridoxal 5'-phosphate as cofactor.

The enzyme catalyses L-alanine = D-alanine. Its pathway is amino-acid biosynthesis; D-alanine biosynthesis; D-alanine from L-alanine: step 1/1. Its function is as follows. Catalyzes the interconversion of L-alanine and D-alanine. May also act on other amino acids. This chain is Alanine racemase (alr), found in Helicobacter acinonychis (strain Sheeba).